Reading from the N-terminus, the 190-residue chain is Ribosome maturation factor RimM (190 aa).

One can recognise a PRC barrel domain in the interval 95–177 (EDDEFFYTDL…AGLIDSPDDL (83 aa)). The interval 170–190 (LIDSPDDLTGKPPKPPGKTKE) is disordered. A compositionally biased stretch (pro residues) spans 181 to 190 (PPKPPGKTKE).

The protein belongs to the RimM family. As to quaternary structure, binds ribosomal protein uS19.

It localises to the cytoplasm. In terms of biological role, an accessory protein needed during the final step in the assembly of 30S ribosomal subunit, possibly for assembly of the head region. Essential for efficient processing of 16S rRNA. May be needed both before and after RbfA during the maturation of 16S rRNA. It has affinity for free ribosomal 30S subunits but not for 70S ribosomes. The polypeptide is Ribosome maturation factor RimM (Rhizobium rhizogenes (strain K84 / ATCC BAA-868) (Agrobacterium radiobacter)).